The chain runs to 290 residues: 2-dehydro-3-deoxyphosphooctonate aldolase 1 (290 aa).

Ala2 is modified (N-acetylalanine).

This sequence belongs to the KdsA family. Expressed in shoots.

Its subcellular location is the cytoplasm. The enzyme catalyses D-arabinose 5-phosphate + phosphoenolpyruvate + H2O = 3-deoxy-alpha-D-manno-2-octulosonate-8-phosphate + phosphate. Catalyzes the stereospecific condensation of D-arabinose 5-phosphate and phosphoenolpyruvate to form 3-deoxy-D-manno-octulosonate 8-phosphate (KDO-8-phosphate) and inorganic phosphate. Involved in the biosynthesis of 3-deoxy-D-manno-octulosonate (KDO) which is an indispensable component of rhamnogalacturonan II (RG-II), a structurally complex pectic polysaccharide of the primary cell wall. RG-II is essential for the cell wall integrity of rapidly growing tissues and pollen tube growth and elongation. The chain is 2-dehydro-3-deoxyphosphooctonate aldolase 1 (KDSA1) from Arabidopsis thaliana (Mouse-ear cress).